Here is a 193-residue protein sequence, read N- to C-terminus: MKKNTSIKQTVTIAINTAIYVILSCFASIPIGPNVVLETSFSFLVFVAVLFGSKVGLSVGLLGHIIKDFFLFGNVYFNWIVCSGLLGFLFGLSKNLINLKYHSFTRKKILFFWLYQVFVNVLVFGLIAPISDVWIYAQPLKLVFLQGFLVVLSNILSYSLFGIFLMSKYSNNYGKKEVLASNNCVYYKKPPLF.

Helical transmembrane passes span 11 to 31 (VTIA…SIPI), 43 to 63 (FLVF…GLLG), 69 to 89 (FFLF…LGFL), 109 to 129 (ILFF…LIAP), and 147 to 167 (GFLV…FLMS).

Belongs to the UPF0397 family.

It localises to the cell membrane. This Phytoplasma australiense protein is UPF0397 protein PA0141.